The chain runs to 217 residues: MGQKVHPIGLRVGIIRDWDAKWYAEKEYADYLHEDLAIRKFIQKELADASVSTIEIVRAVNKVIVSLHTAKPGMVIGKGGSNVDALRAQLNKLTGKQVHINIVEIKKPDLDAHLVGETIARQLEQRVAFRRAQKQAIQRAMRAGAKGIKTQVSGRLNGADIARAEGYSEGTVPLHTLRADIDYAWEEADTTYGKLGVKVWIYRGEVLPARKNTKGGK.

Positions 38 to 106 constitute a KH type-2 domain; that stretch reads IRKFIQKELA…QVHINIVEIK (69 aa).

This sequence belongs to the universal ribosomal protein uS3 family. In terms of assembly, part of the 30S ribosomal subunit. Forms a tight complex with proteins S10 and S14.

Its function is as follows. Binds the lower part of the 30S subunit head. Binds mRNA in the 70S ribosome, positioning it for translation. The sequence is that of Small ribosomal subunit protein uS3 from Streptococcus thermophilus (strain CNRZ 1066).